Reading from the N-terminus, the 256-residue chain is Imidazole glycerol phosphate synthase subunit HisF (256 aa).

Residues D12 and D131 contribute to the active site.

Belongs to the HisA/HisF family. As to quaternary structure, heterodimer of HisH and HisF.

The protein localises to the cytoplasm. The catalysed reaction is 5-[(5-phospho-1-deoxy-D-ribulos-1-ylimino)methylamino]-1-(5-phospho-beta-D-ribosyl)imidazole-4-carboxamide + L-glutamine = D-erythro-1-(imidazol-4-yl)glycerol 3-phosphate + 5-amino-1-(5-phospho-beta-D-ribosyl)imidazole-4-carboxamide + L-glutamate + H(+). The protein operates within amino-acid biosynthesis; L-histidine biosynthesis; L-histidine from 5-phospho-alpha-D-ribose 1-diphosphate: step 5/9. Functionally, IGPS catalyzes the conversion of PRFAR and glutamine to IGP, AICAR and glutamate. The HisF subunit catalyzes the cyclization activity that produces IGP and AICAR from PRFAR using the ammonia provided by the HisH subunit. The sequence is that of Imidazole glycerol phosphate synthase subunit HisF from Pseudomonas fluorescens (strain Pf0-1).